An 82-amino-acid polypeptide reads, in one-letter code: Exodeoxyribonuclease 7 small subunit (82 aa).

This sequence belongs to the XseB family. In terms of assembly, heterooligomer composed of large and small subunits.

The protein resides in the cytoplasm. It carries out the reaction Exonucleolytic cleavage in either 5'- to 3'- or 3'- to 5'-direction to yield nucleoside 5'-phosphates.. Its function is as follows. Bidirectionally degrades single-stranded DNA into large acid-insoluble oligonucleotides, which are then degraded further into small acid-soluble oligonucleotides. This is Exodeoxyribonuclease 7 small subunit from Pectobacterium atrosepticum (strain SCRI 1043 / ATCC BAA-672) (Erwinia carotovora subsp. atroseptica).